The primary structure comprises 552 residues: Urocanate hydratase (552 aa).

NAD(+)-binding positions include 49–50 (GG), Q127, 173–175 (GMG), D193, 239–240 (NA), 260–264 (QTSAH), 270–271 (YV), and Y319. Residue C407 is part of the active site. NAD(+) is bound at residue G489.

The protein belongs to the urocanase family. It depends on NAD(+) as a cofactor.

Its subcellular location is the cytoplasm. It catalyses the reaction 4-imidazolone-5-propanoate = trans-urocanate + H2O. Its pathway is amino-acid degradation; L-histidine degradation into L-glutamate; N-formimidoyl-L-glutamate from L-histidine: step 2/3. Functionally, catalyzes the conversion of urocanate to 4-imidazolone-5-propionate. The protein is Urocanate hydratase of Bacillus cytotoxicus (strain DSM 22905 / CIP 110041 / 391-98 / NVH 391-98).